A 341-amino-acid chain; its full sequence is DnaJ homolog subfamily C member 22 (341 aa).

In terms of domain architecture, TM2 spans 4-50 (GLLMTYALWAFGGPVGLHHLYLGRDSHALLWMLTLGGGGLGWLWEFW). Transmembrane regions (helical) follow at residues 5-25 (LLMT…HLYL), 30-50 (HALL…WEFW), 81-101 (FASQ…SLSS), 105-125 (FYIV…AAVG), 135-155 (LGAA…ILPI), 185-205 (VGLA…YNTA), and 232-252 (VESV…APGF). The J domain occupies 277–341 (LAHQVLGIPE…QPKKPRASWR (65 aa)).

It localises to the membrane. Its function is as follows. May function as a co-chaperone. The chain is DnaJ homolog subfamily C member 22 (Dnajc22) from Rattus norvegicus (Rat).